A 79-amino-acid chain; its full sequence is Small ribosomal subunit protein bS18 (79 aa).

The protein belongs to the bacterial ribosomal protein bS18 family. As to quaternary structure, part of the 30S ribosomal subunit. Forms a tight heterodimer with protein bS6.

Functionally, binds as a heterodimer with protein bS6 to the central domain of the 16S rRNA, where it helps stabilize the platform of the 30S subunit. This Bacillus licheniformis (strain ATCC 14580 / DSM 13 / JCM 2505 / CCUG 7422 / NBRC 12200 / NCIMB 9375 / NCTC 10341 / NRRL NRS-1264 / Gibson 46) protein is Small ribosomal subunit protein bS18.